Here is a 213-residue protein sequence, read N- to C-terminus: Thiamine-phosphate synthase (213 aa).

4-amino-2-methyl-5-(diphosphooxymethyl)pyrimidine contacts are provided by residues 41-45 (QFRVK) and asparagine 73. Mg(2+)-binding residues include aspartate 74 and aspartate 93. Threonine 112 contributes to the 4-amino-2-methyl-5-(diphosphooxymethyl)pyrimidine binding site. 139-141 (SAT) provides a ligand contact to 2-[(2R,5Z)-2-carboxy-4-methylthiazol-5(2H)-ylidene]ethyl phosphate. Residue lysine 142 participates in 4-amino-2-methyl-5-(diphosphooxymethyl)pyrimidine binding. Residue glycine 171 participates in 2-[(2R,5Z)-2-carboxy-4-methylthiazol-5(2H)-ylidene]ethyl phosphate binding.

Belongs to the thiamine-phosphate synthase family. Requires Mg(2+) as cofactor.

The enzyme catalyses 2-[(2R,5Z)-2-carboxy-4-methylthiazol-5(2H)-ylidene]ethyl phosphate + 4-amino-2-methyl-5-(diphosphooxymethyl)pyrimidine + 2 H(+) = thiamine phosphate + CO2 + diphosphate. It catalyses the reaction 2-(2-carboxy-4-methylthiazol-5-yl)ethyl phosphate + 4-amino-2-methyl-5-(diphosphooxymethyl)pyrimidine + 2 H(+) = thiamine phosphate + CO2 + diphosphate. It carries out the reaction 4-methyl-5-(2-phosphooxyethyl)-thiazole + 4-amino-2-methyl-5-(diphosphooxymethyl)pyrimidine + H(+) = thiamine phosphate + diphosphate. It functions in the pathway cofactor biosynthesis; thiamine diphosphate biosynthesis; thiamine phosphate from 4-amino-2-methyl-5-diphosphomethylpyrimidine and 4-methyl-5-(2-phosphoethyl)-thiazole: step 1/1. Its function is as follows. Condenses 4-methyl-5-(beta-hydroxyethyl)thiazole monophosphate (THZ-P) and 2-methyl-4-amino-5-hydroxymethyl pyrimidine pyrophosphate (HMP-PP) to form thiamine monophosphate (TMP). The sequence is that of Thiamine-phosphate synthase from Erythrobacter litoralis (strain HTCC2594).